The chain runs to 238 residues: Putative type I specificity subunit S.MpnORF201P (238 aa).

It belongs to the type-I restriction system S methylase family. In terms of assembly, the methyltransferase is composed of M and S polypeptides.

Functionally, the specificity (S) subunit of a type I methyltransferase (MTase); this subunit dictates DNA sequence specificity. The single R subunit has multiple frameshifts and is probably not expressed. The sequence is that of Putative type I specificity subunit S.MpnORF201P from Mycoplasma pneumoniae (strain ATCC 29342 / M129 / Subtype 1) (Mycoplasmoides pneumoniae).